The sequence spans 484 residues: Sodium-dependent glucose transporter 1 (484 aa).

Phosphoserine is present on S6. 12 helical membrane-spanning segments follow: residues 40–60 (WFTT…AAVL), 80–100 (EIFV…GVLF), 106–126 (FLLL…TPFC), 135–155 (MMSI…VLIL), 168–188 (ALHF…KLAW), 227–247 (LLWA…FLFA), 274–294 (ALLC…VTYG), 317–337 (SIFW…ATLL), 340–360 (GTMM…LVLF), 366–386 (CLWI…PSGI), 401–421 (AFIL…SGIL), and 428–448 (LPVI…LFPV).

This sequence belongs to the major facilitator superfamily. In terms of tissue distribution, expressed in brain, liver, lung, and kidney. In kidney expressed in cortex and inner medulla, in ascending thin limbs (ATLs) and lower descending thin limbs (DTLs). Primarily expressed in the proximal tubules of the kidney.

Its subcellular location is the apical cell membrane. Its function is as follows. May function as a sodium-dependent glucose transporter. Potential channels for urea in the inner medulla of kidney. In Rattus norvegicus (Rat), this protein is Sodium-dependent glucose transporter 1.